The chain runs to 328 residues: Chlorate reductase subunit beta (328 aa).

4Fe-4S ferredoxin-type domains follow at residues V6 to R35, N125 to E156, and G158 to Q187. Positions 15, 18, 21, 25, 134, 137, and 142 each coordinate [4Fe-4S] cluster. [3Fe-4S] cluster contacts are provided by C146, C167, and C173. [4Fe-4S] cluster-binding residues include C177, C194, C197, C209, and C213.

In terms of assembly, heterotrimer of alpha, beta and gamma subunits. [3Fe-4S] cluster serves as cofactor. Requires [4Fe-4S] cluster as cofactor.

The protein localises to the periplasm. In terms of biological role, electron transfer subunit of the terminal reductase during anaerobic growth on chlorate. In Ideonella dechloratans, this protein is Chlorate reductase subunit beta (clrB).